The following is a 483-amino-acid chain: AP-3 complex subunit mu (483 aa).

The MHD domain occupies Asn-211 to Arg-482.

This sequence belongs to the adaptor complexes medium subunit family. Adaptor protein complex 3 (AP-3) is a heterotetramer composed of 2 large adaptins (APL5 and APL6), a medium adaptin (APM3) and a small adaptin (APS3).

The protein localises to the golgi apparatus. The protein resides in the cytoplasmic vesicle membrane. Functionally, part of the AP-3 complex, an adaptor-related complex which is not clathrin-associated. The complex is associated with the Golgi region as well as more peripheral structures. It facilitates the budding of vesicles from the Golgi membrane and may be directly involved in trafficking to the vacuole. Required for the transport via the ALP pathway, which directs the transport of the cargo proteins PHO8 and VAM3 to the vacuole. In Saccharomyces cerevisiae (strain ATCC 204508 / S288c) (Baker's yeast), this protein is AP-3 complex subunit mu (APM3).